The sequence spans 748 residues: Pentatricopeptide repeat-containing protein At3g13880 (748 aa).

PPR repeat units lie at residues D46–P80, C81–R111, N112–L146, D147–Q181, Q182–R212, D213–L247, T248–F285, D286–K316, N317–P356, S357–S391, D392–Q422, D423–P457, E458–A492, F493–P523, D524–P558, N559–D589, and N595–V629. The interval T630 to G705 is type E motif. Positions N706 to F736 are type E(+) motif.

This sequence belongs to the PPR family. PCMP-E subfamily.

In Arabidopsis thaliana (Mouse-ear cress), this protein is Pentatricopeptide repeat-containing protein At3g13880 (PCMP-E89).